We begin with the raw amino-acid sequence, 602 residues long: Lysine--tRNA ligase, chloroplastic/mitochondrial (602 aa).

A compositionally biased stretch (low complexity) spans 50-62; sequence SSSSSSATTAETS. Residues 50–83 are disordered; sequence SSSSSSATTAETSKPSGRNRRSASSSNSTSDREA. The OB DNA-binding region spans 136 to 214; sequence VSIAGRVVAR…SICVNSFSIL (79 aa). Substrate-binding residues include Gly285 and Glu309. Residues 331 to 333 and 339 to 340 each bind ATP; these read RNE and HN. The substrate site is built by Glu347 and Tyr349. Ca(2+)-binding residues include Glu492 and Glu499. Residue 499-500 coordinates ATP; it reads EM. Positions 502 and 506 each coordinate substrate. Positions 524–543 are enriched in basic and acidic residues; it reads HNAKRAEAVRESPEPNAKKD. Positions 524–550 are disordered; sequence HNAKRAEAVRESPEPNAKKDDDDDESY. 575 to 578 contributes to the ATP binding site; that stretch reads GIDR.

The protein belongs to the class-II aminoacyl-tRNA synthetase family. Ca(2+) serves as cofactor.

It localises to the plastid. Its subcellular location is the chloroplast. The protein localises to the mitochondrion. It catalyses the reaction tRNA(Lys) + L-lysine + ATP = L-lysyl-tRNA(Lys) + AMP + diphosphate. In terms of biological role, catalyzes the specific attachment of an amino acid to its cognate tRNA in a 2 step reaction: the amino acid (AA) is first activated by ATP to form AA-AMP and then transferred to the acceptor end of the tRNA. The polypeptide is Lysine--tRNA ligase, chloroplastic/mitochondrial (Arabidopsis thaliana (Mouse-ear cress)).